The primary structure comprises 123 residues: Holo-[acyl-carrier-protein] synthase (123 aa).

2 residues coordinate Mg(2+): Asp8 and Glu60.

The protein belongs to the P-Pant transferase superfamily. AcpS family. Requires Mg(2+) as cofactor.

Its subcellular location is the cytoplasm. The enzyme catalyses apo-[ACP] + CoA = holo-[ACP] + adenosine 3',5'-bisphosphate + H(+). In terms of biological role, transfers the 4'-phosphopantetheine moiety from coenzyme A to a Ser of acyl-carrier-protein. The polypeptide is Holo-[acyl-carrier-protein] synthase (Ehrlichia ruminantium (strain Gardel)).